Consider the following 357-residue polypeptide: GTPase Obg (357 aa).

The Obg domain occupies 1-159; sequence MKFVDEAEIQ…RTLKLELKLL (159 aa). In terms of domain architecture, OBG-type G spans 160 to 343; the sequence is ADIGMLGFPN…IMKSAMTLFE (184 aa). Residues 166-173, 191-195, 213-216, 293-296, and 324-326 each bind GTP; these read GFPNVGKS, FTTLY, DVPG, NKAD, and SAV. Residues S173 and T193 each contribute to the Mg(2+) site.

Belongs to the TRAFAC class OBG-HflX-like GTPase superfamily. OBG GTPase family. As to quaternary structure, monomer. Requires Mg(2+) as cofactor.

Its subcellular location is the cytoplasm. In terms of biological role, an essential GTPase which binds GTP, GDP and possibly (p)ppGpp with moderate affinity, with high nucleotide exchange rates and a fairly low GTP hydrolysis rate. Plays a role in control of the cell cycle, stress response, ribosome biogenesis and in those bacteria that undergo differentiation, in morphogenesis control. In Xylella fastidiosa (strain M12), this protein is GTPase Obg.